Consider the following 240-residue polypeptide: MATLFIADLHLCAEEPAITAGFLRFLAGEARKADALYILGDLFEAWIGDDDPNPLHRQMAAAIKAVSDSGVPCYFIHGNRDFLLGKRFARESGMTLLPEEKVLELYGRRVLIMHGDTLCTDDAGYQAFRAKVHKPWLQTLFLALPLFVRKRIAARMRANSKEANSSKSLAIMDVNQNAVVSAMEKHQVQWLIHGHTHRPAVHELIANQQTAFRVVLGAWHTEGSMVKVTADDVELIHFPF.

Residues D8, H10, D41, N79, and H114 each coordinate Mn(2+). 79-80 (NR) contacts substrate. Substrate is bound by residues D122, S160, N164, K167, and H195. 2 residues coordinate Mn(2+): H195 and H197.

It belongs to the LpxH family. Mn(2+) is required as a cofactor.

The protein localises to the cell inner membrane. The enzyme catalyses UDP-2-N,3-O-bis[(3R)-3-hydroxytetradecanoyl]-alpha-D-glucosamine + H2O = 2-N,3-O-bis[(3R)-3-hydroxytetradecanoyl]-alpha-D-glucosaminyl 1-phosphate + UMP + 2 H(+). The protein operates within glycolipid biosynthesis; lipid IV(A) biosynthesis; lipid IV(A) from (3R)-3-hydroxytetradecanoyl-[acyl-carrier-protein] and UDP-N-acetyl-alpha-D-glucosamine: step 4/6. Hydrolyzes the pyrophosphate bond of UDP-2,3-diacylglucosamine to yield 2,3-diacylglucosamine 1-phosphate (lipid X) and UMP by catalyzing the attack of water at the alpha-P atom. Involved in the biosynthesis of lipid A, a phosphorylated glycolipid that anchors the lipopolysaccharide to the outer membrane of the cell. This chain is UDP-2,3-diacylglucosamine hydrolase, found in Escherichia coli O81 (strain ED1a).